A 253-amino-acid chain; its full sequence is Indole-3-glycerol phosphate synthase (253 aa).

The protein belongs to the TrpC family.

It carries out the reaction 1-(2-carboxyphenylamino)-1-deoxy-D-ribulose 5-phosphate + H(+) = (1S,2R)-1-C-(indol-3-yl)glycerol 3-phosphate + CO2 + H2O. Its pathway is amino-acid biosynthesis; L-tryptophan biosynthesis; L-tryptophan from chorismate: step 4/5. This chain is Indole-3-glycerol phosphate synthase, found in Bacillus cereus (strain ZK / E33L).